The sequence spans 1070 residues: DNA-directed RNA polymerase subunit beta (1070 aa).

It belongs to the RNA polymerase beta chain family. In plastids the minimal PEP RNA polymerase catalytic core is composed of four subunits: alpha, beta, beta', and beta''. When a (nuclear-encoded) sigma factor is associated with the core the holoenzyme is formed, which can initiate transcription.

It is found in the plastid. Its subcellular location is the chloroplast. It carries out the reaction RNA(n) + a ribonucleoside 5'-triphosphate = RNA(n+1) + diphosphate. DNA-dependent RNA polymerase catalyzes the transcription of DNA into RNA using the four ribonucleoside triphosphates as substrates. The protein is DNA-directed RNA polymerase subunit beta of Illicium oligandrum (Star anise).